Here is a 490-residue protein sequence, read N- to C-terminus: Coagulation factor X (490 aa).

The first 20 residues, 1–20, serve as a signal peptide directing secretion; sequence MANPLHLVLLGAALAGLLLS. Positions 21-40 are excised as a propeptide; that stretch reads GSSVFISRRAANDVLARTRR. In terms of domain architecture, Gla spans 41–85; that stretch reads ANSFLEELKKGNLERECMEENCSYEEALEVFEDREKTNEFWNKYV. A 4-carboxyglutamate mark is found at Glu46, Glu47, Glu54, Glu56, Glu59, and Glu60. An intrachain disulfide couples Cys57 to Cys62. An N-linked (GlcNAc...) asparagine glycan is attached at Asn61. 4-carboxyglutamate occurs at positions 65, 66, 69, 72, 75, and 79. The EGF-like 1; calcium-binding domain maps to 86-122; the sequence is DGDQCESNPCQNQGTCKDGLGMYTCSCVEGYEGQDCE. 11 disulfide bridges follow: Cys90–Cys101, Cys95–Cys110, Cys112–Cys121, Cys129–Cys140, Cys136–Cys149, Cys151–Cys164, Cys172–Cys340, Cys239–Cys244, Cys259–Cys275, Cys388–Cys402, and Cys413–Cys441. At Asp103 the chain carries (3R)-3-hydroxyaspartate. The region spanning 125–165 is the EGF-like 2 domain; the sequence is TRKLCSLDNGGCDQFCKEEENSVLCSCASGYTLGDNGKSCI. The interval 183 to 230 is disordered; it reads SPATNSSEGPPEAPGPEQQDDGNLTATENPFNLLDSPEPPPEDDSSSL. A propeptide spans 184–232 (activation peptide); that stretch reads PATNSSEGPPEAPGPEQQDDGNLTATENPFNLLDSPEPPPEDDSSSLVR. N-linked (GlcNAc...) asparagine glycans are attached at residues Asn187 and Asn205. The span at 203–212 shows a compositional bias: polar residues; it reads DGNLTATENP. One can recognise a Peptidase S1 domain in the interval 233-465; that stretch reads IVGGQDCRDG…FLKWIEKSMR (233 aa). Residues His274 and Asp320 each act as charge relay system in the active site. The Charge relay system role is filled by Ser417.

This sequence belongs to the peptidase S1 family. In terms of assembly, the two chains are formed from a single-chain precursor by the excision of two Arg residues and are held together by 1 or more disulfide bonds. Forms a heterodimer with SERPINA5. The vitamin K-dependent, enzymatic carboxylation of some glutamate residues allows the modified protein to bind calcium. Post-translationally, N- and O-glycosylated. In terms of processing, proteolytically cleaved and activated by cathepsin CTSG. The activation peptide is cleaved by factor IXa (in the intrinsic pathway), or by factor VIIa (in the extrinsic pathway). The iron and 2-oxoglutarate dependent 3-hydroxylation of aspartate and asparagine is (R) stereospecific within EGF domains.

The protein localises to the secreted. It carries out the reaction Selective cleavage of Arg-|-Thr and then Arg-|-Ile bonds in prothrombin to form thrombin.. Inhibited by SERPINA5. Its function is as follows. Factor Xa is a vitamin K-dependent glycoprotein that converts prothrombin to thrombin in the presence of factor Va, calcium and phospholipid during blood clotting. Factor Xa activates pro-inflammatory signaling pathways in a protease-activated receptor (PAR)-dependent manner. This is Coagulation factor X (F10) from Oryctolagus cuniculus (Rabbit).